A 28-amino-acid chain; its full sequence is Phospholipase A2 2 (28 aa).

This sequence belongs to the phospholipase A2 family. Group I subfamily. Ca(2+) serves as cofactor. In terms of tissue distribution, expressed by the venom gland.

It is found in the secreted. It carries out the reaction a 1,2-diacyl-sn-glycero-3-phosphocholine + H2O = a 1-acyl-sn-glycero-3-phosphocholine + a fatty acid + H(+). Functionally, snake venom phospholipase A2 (PLA2) that inhibits neuromuscular transmission by blocking acetylcholine release from the nerve termini. PLA2 catalyzes the calcium-dependent hydrolysis of the 2-acyl groups in 3-sn-phosphoglycerides. The protein is Phospholipase A2 2 of Micrurus nigrocinctus (Central American coral snake).